The following is a 101-amino-acid chain: Large ribosomal subunit protein uL24 (101 aa).

The protein belongs to the universal ribosomal protein uL24 family. Part of the 50S ribosomal subunit.

One of two assembly initiator proteins, it binds directly to the 5'-end of the 23S rRNA, where it nucleates assembly of the 50S subunit. Its function is as follows. One of the proteins that surrounds the polypeptide exit tunnel on the outside of the subunit. This chain is Large ribosomal subunit protein uL24, found in Thermobifida fusca (strain YX).